A 154-amino-acid polypeptide reads, in one-letter code: uncharacterized protein (154 aa).

This is an uncharacterized protein from Schizosaccharomyces pombe (strain 972 / ATCC 24843) (Fission yeast).